The chain runs to 508 residues: MADDPGSSFTTVWNAVVSELNGEPVADAEPNRTTLVTPLTPQQRAWLNLVRPLTIVEGFALLSVPSSFVQNEIERHLRAPITDALSRRLGQQIQLGVRIAPPPDDVEDALIPSAEPFPDTDADLSARRRTDSRASGERGAVTNTQPGWTNYFTERPHAIDPAVAAGTSLNRRYTFDTFVIGASNRFAHAAVLAIAEAPARAYNPLFIWGESGLGKTHLLHAAGNYAQRFFPGMRVKYVSTEEFTNDFINSLRDDRKVPFKRTIRDVDVLLVDDIQFIEGKEGIQEEFFHTFNTLHNANKQIVISSDRPPKQLATLEDRLRTRFEWGLITDVQPPELETRIAILRKKAQMERLAVPDDVLELIASSIERNIRELEGALIRVTAFASLNKTPIDKSLAEIVLRDLIADASTMQISAATIMAATAEYFDTTVVELRGPGKTRALAQSRQIAMYLCRELTDLSLPKIGQAFGRDHTTLMYGQRKILSEMAERRGGFDHVKELTTRIRQRSKR.

A domain I, interacts with DnaA modulators region spans residues 1–91; it reads MADDPGSSFT…TDALSRRLGQ (91 aa). The tract at residues 91–167 is domain II; it reads QQIQLGVRIA…AIDPAVAAGT (77 aa). Positions 104–152 are disordered; the sequence is DDVEDALIPSAEPFPDTDADLSARRRTDSRASGERGAVTNTQPGWTNYF. A compositionally biased stretch (basic and acidic residues) spans 124–136; that stretch reads LSARRRTDSRASG. Residues 141 to 152 show a composition bias toward polar residues; that stretch reads VTNTQPGWTNYF. The domain III, AAA+ region stretch occupies residues 168–384; sequence SLNRRYTFDT…GALIRVTAFA (217 aa). Positions 212, 214, 215, and 216 each coordinate ATP. Residues 385-508 form a domain IV, binds dsDNA region; the sequence is SLNKTPIDKS…TTRIRQRSKR (124 aa).

The protein belongs to the DnaA family. In terms of assembly, oligomerizes as a right-handed, spiral filament on DNA at oriC.

The protein localises to the cytoplasm. Plays an essential role in the initiation and regulation of chromosomal replication. ATP-DnaA binds to the origin of replication (oriC) to initiate formation of the DNA replication initiation complex once per cell cycle. Binds the DnaA box (a 9 base pair repeat at the origin) and separates the double-stranded (ds)DNA. Forms a right-handed helical filament on oriC DNA; dsDNA binds to the exterior of the filament while single-stranded (ss)DNA is stabiized in the filament's interior. The ATP-DnaA-oriC complex binds and stabilizes one strand of the AT-rich DNA unwinding element (DUE), permitting loading of DNA polymerase. After initiation quickly degrades to an ADP-DnaA complex that is not apt for DNA replication. Binds acidic phospholipids. This is Chromosomal replication initiator protein DnaA from Mycobacterium avium.